The sequence spans 392 residues: Formate-dependent phosphoribosylglycinamide formyltransferase (392 aa).

Residues 20–21 (EL) and E80 each bind N(1)-(5-phospho-beta-D-ribosyl)glycinamide. ATP contacts are provided by residues R112, K153, 158–163 (SSGKGQ), 193–196 (EGFV), and E201. An ATP-grasp domain is found at 117 to 306 (RLAAETLGLP…EFALHVRAIL (190 aa)). Mg(2+)-binding residues include E265 and E277. N(1)-(5-phospho-beta-D-ribosyl)glycinamide-binding positions include D284, K355, and 362-363 (RR).

This sequence belongs to the PurK/PurT family. As to quaternary structure, homodimer.

It carries out the reaction N(1)-(5-phospho-beta-D-ribosyl)glycinamide + formate + ATP = N(2)-formyl-N(1)-(5-phospho-beta-D-ribosyl)glycinamide + ADP + phosphate + H(+). It functions in the pathway purine metabolism; IMP biosynthesis via de novo pathway; N(2)-formyl-N(1)-(5-phospho-D-ribosyl)glycinamide from N(1)-(5-phospho-D-ribosyl)glycinamide (formate route): step 1/1. Involved in the de novo purine biosynthesis. Catalyzes the transfer of formate to 5-phospho-ribosyl-glycinamide (GAR), producing 5-phospho-ribosyl-N-formylglycinamide (FGAR). Formate is provided by PurU via hydrolysis of 10-formyl-tetrahydrofolate. The protein is Formate-dependent phosphoribosylglycinamide formyltransferase of Aeromonas hydrophila subsp. hydrophila (strain ATCC 7966 / DSM 30187 / BCRC 13018 / CCUG 14551 / JCM 1027 / KCTC 2358 / NCIMB 9240 / NCTC 8049).